A 538-amino-acid chain; its full sequence is MAVAAAAAAAGPAGAGGGRAQRSGLLEVLVRDRWHKVLVNLSEDALVLSSEEGAAAYNGIGTATNGSFCRGAGAGHPGAGGAQPPDSPAGVRTAFTDLPEQVPESISNQKRGVKVLKQELGGLGISIKGGKENKMPILISKIFKGLAADQTQALYVGDAILSVNGADLRDATHDEAVQALKRAGKEVLLEVKYMREATPYVKKGSPVSEIGWETPPPESPRLGGSTSDPPSSQSFSFHRDRKSIPLKMCYVTRSMALADPENRQLEIHSPDAKHTVILRSKDSATAQAWFSAIHSNVNDLLTRVIAEVREQLGKTGIAGSREIRHLGWLAEKVPGESKKQWKPALVVLTEKDLLIYDSMPRRKEAWFSPVHTYPLLATRLVHSGPGKGSPQAGVDLSFATRTGTRQGIETHLFRAETSRDLSHWTRSIVQGCHNSAELIAEISTACTYKNQECRLTIHYENGFSITTEPQEGAFPKTIIQSPYEKLKMSSDDGIRMLYLDFGGKDGEIQLDLHSCPKPIVFIIHSFLSAKITRLGLVA.

Alanine 2 is modified (N-acetylalanine). PH domains are found at residues arginine 19–asparagine 298 and glutamate 322–histidine 433. Phosphoserine is present on residues serine 87, serine 126, and serine 205. The 84-residue stretch at glycine 112 to arginine 195 folds into the PDZ domain. Residues serine 205 to phenylalanine 237 form a disordered region. Threonine 214 carries the post-translational modification Phosphothreonine. Residues serine 219, serine 232, serine 236, and serine 389 each carry the phosphoserine modification. Low complexity predominate over residues serine 225–serine 236. The 57-residue stretch at proline 482–alanine 538 folds into the SU domain. The segment at proline 518 to alanine 538 is calmodulin-binding.

It belongs to the syntrophin family. In terms of assembly, monomer and homodimer. Interacts with the other members of the syntrophin family SNTA1 and SNTB2; with the sodium channel proteins SCN4A and SCN5A. Interacts with the viral HTLV-1 TAX protein and with dystrophin protein DMD and related proteins DTNA and UTRN. Interacts with DTNB. In terms of processing, phosphorylated by CaM-kinase II. As to expression, ubiquitous.

Its subcellular location is the cell membrane. It is found in the sarcolemma. The protein resides in the cell junction. It localises to the cytoplasm. The protein localises to the cytoskeleton. Adapter protein that binds to and probably organizes the subcellular localization of a variety of membrane proteins. May link various receptors to the actin cytoskeleton and the dystrophin glycoprotein complex. This is Beta-1-syntrophin (SNTB1) from Homo sapiens (Human).